Here is a 433-residue protein sequence, read N- to C-terminus: Indole diterpene prenyltransferase terF (433 aa).

It belongs to the tryptophan dimethylallyltransferase family.

The protein operates within secondary metabolite biosynthesis. Its function is as follows. Indole diterpene prenyltransferase; part of the gene cluster that mediates the biosynthesis of terpendoles, indole-diterpene (IDT) mycotoxins including terpendole I, terpendole K, terpendole C, as well as the kinesin Eg5 inhibitor terpendole E. Terpendoles biosynthesis begins with the synthesis of geranylgeranyl diphosphate (GGPP) by a yet unidentified GGPP synthase. Condensation of indole-3-glycerol phosphate with GGPP by the prenyltransferase terC then forms 3-geranylgeranylindole (3-GGI), followed by epoxidation and cyclization of this intermediate (by the FAD-dependent monooxygeanse terM and the terpene cyclase terB) to form paspaline. The cytochrome monooxygenase terQ then hydroxylates paspalline at C-11 to yield terpendole E. The cytochrome monooxygenase terP converts terpendole E to 13-desoxyterpendole I, and terQ converts 13-desoxyterpendole I into terpendole I. TerF and terK are required for conversion of terpendole I to terpendole C which is further converted to terpendole K. This is Indole diterpene prenyltransferase terF from Tolypocladium album (Soil fungus).